Consider the following 207-residue polypeptide: Putative 3-methyladenine DNA glycosylase (207 aa).

The protein belongs to the DNA glycosylase MPG family.

This chain is Putative 3-methyladenine DNA glycosylase, found in Koribacter versatilis (strain Ellin345).